Consider the following 384-residue polypeptide: Cell division protein FtsZ (384 aa).

GTP-binding positions include 20–24 (GGGGN), 107–109 (GTG), Glu-138, Arg-142, and Asn-186.

It belongs to the FtsZ family. As to quaternary structure, homodimer. Polymerizes to form a dynamic ring structure in a strictly GTP-dependent manner. Interacts directly with several other division proteins.

It is found in the cytoplasm. Functionally, essential cell division protein that forms a contractile ring structure (Z ring) at the future cell division site. The regulation of the ring assembly controls the timing and the location of cell division. One of the functions of the FtsZ ring is to recruit other cell division proteins to the septum to produce a new cell wall between the dividing cells. Binds GTP and shows GTPase activity. This is Cell division protein FtsZ from Wigglesworthia glossinidia brevipalpis.